The primary structure comprises 132 residues: Small ribosomal subunit protein uS8 (132 aa).

The protein belongs to the universal ribosomal protein uS8 family. In terms of assembly, part of the 30S ribosomal subunit. Contacts proteins S5 and S12.

Functionally, one of the primary rRNA binding proteins, it binds directly to 16S rRNA central domain where it helps coordinate assembly of the platform of the 30S subunit. This is Small ribosomal subunit protein uS8 from Rhizobium johnstonii (strain DSM 114642 / LMG 32736 / 3841) (Rhizobium leguminosarum bv. viciae).